The primary structure comprises 870 residues: Protein RRP6-like 2 (870 aa).

The 3'-5' exonuclease domain occupies 263–428; sequence VQEVKDLKEL…YIYDLIKLEL (166 aa). The HRDC domain occupies 479–559; sequence NAAQLAIVAG…RQSMQHYAAF (81 aa). 4 disordered regions span residues 583–605, 649–668, 688–775, and 821–870; these read SEKKDLHTGDVASPSLKENSSQL, GALLGNAASKKKSRTDEKVK, TEKV…EDEP, and FGEG…SFKN. Basic and acidic residues-rich tracts occupy residues 720–729 and 821–834; these read SKEDGVKELK and FGEGHKGRQGKREA. The segment covering 840 to 849 has biased composition (polar residues); the sequence is KGSTQEQSEF.

It localises to the nucleus. The protein resides in the nucleolus. The protein localises to the cytoplasm. Acts as an important epigenetic regulator through multiple silencing mechanisms. Involved in association with RRP6L1 in the silencing of the solo LTR locus. Controls levels of non-coding RNAs (ncRNAs) from the solo LTR locus. Seems to function independently of the RNA-mediated gene silencing (RdDM) pathway. Functions redundantly with RRP6L1 in the regulation of FLC locus. Participates in the maintenance of trimethylated 'Lys-27' (H3K27me3) at FLC locus via the regulation of antisense long non-coding RNAs (lncRNAs) and the regulation of diverse antisense RNAs derived from the FLC locus. Seems not involved in the exosomal RNA degradation. May be involved in poly(A)-mediated RNA degradation. In Arabidopsis thaliana (Mouse-ear cress), this protein is Protein RRP6-like 2.